Here is a 495-residue protein sequence, read N- to C-terminus: Ribose import ATP-binding protein RbsA 3 (495 aa).

2 consecutive ABC transporter domains span residues Val5–Glu240 and Ala250–Lys492. Residue Gly37 to Ser44 coordinates ATP.

Belongs to the ABC transporter superfamily. Ribose importer (TC 3.A.1.2.1) family. In terms of assembly, the complex is composed of an ATP-binding protein (RbsA), two transmembrane proteins (RbsC) and a solute-binding protein (RbsB).

Its subcellular location is the cell membrane. The catalysed reaction is D-ribose(out) + ATP + H2O = D-ribose(in) + ADP + phosphate + H(+). In terms of biological role, part of the ABC transporter complex RbsABC involved in ribose import. Responsible for energy coupling to the transport system. This chain is Ribose import ATP-binding protein RbsA 3, found in Rubrobacter xylanophilus (strain DSM 9941 / JCM 11954 / NBRC 16129 / PRD-1).